A 333-amino-acid chain; its full sequence is UDP-3-O-acylglucosamine N-acyltransferase 2 (333 aa).

Residue His243 is the Proton acceptor of the active site.

Belongs to the transferase hexapeptide repeat family. LpxD subfamily. In terms of assembly, homotrimer.

The catalysed reaction is a UDP-3-O-[(3R)-3-hydroxyacyl]-alpha-D-glucosamine + a (3R)-hydroxyacyl-[ACP] = a UDP-2-N,3-O-bis[(3R)-3-hydroxyacyl]-alpha-D-glucosamine + holo-[ACP] + H(+). It participates in bacterial outer membrane biogenesis; LPS lipid A biosynthesis. In terms of biological role, catalyzes the N-acylation of UDP-3-O-acylglucosamine using 3-hydroxyacyl-ACP as the acyl donor. Is involved in the biosynthesis of lipid A, a phosphorylated glycolipid that anchors the lipopolysaccharide to the outer membrane of the cell. This chain is UDP-3-O-acylglucosamine N-acyltransferase 2, found in Koribacter versatilis (strain Ellin345).